The chain runs to 173 residues: MELVVGRIARAHGVTGELSVEVRTDDPDERFAVGSVLTGRLPRGGGSRRFTVESVREHSGRLLIRFAGVSDRDAADALRGTLFMVDTTDLPPIEDPDEFYDHQLEGLAVRTLDGAAVGTVSEVLHTPGGELLSVRGSERREILVPFVSAIVTSISLADKVIEIDPPEGLLDLS.

The PRC barrel domain occupies 95 to 169 (DPDEFYDHQL…VIEIDPPEGL (75 aa)).

This sequence belongs to the RimM family. Binds ribosomal protein uS19.

It localises to the cytoplasm. An accessory protein needed during the final step in the assembly of 30S ribosomal subunit, possibly for assembly of the head region. Essential for efficient processing of 16S rRNA. May be needed both before and after RbfA during the maturation of 16S rRNA. It has affinity for free ribosomal 30S subunits but not for 70S ribosomes. This Mycobacteroides abscessus (strain ATCC 19977 / DSM 44196 / CCUG 20993 / CIP 104536 / JCM 13569 / NCTC 13031 / TMC 1543 / L948) (Mycobacterium abscessus) protein is Ribosome maturation factor RimM.